A 799-amino-acid chain; its full sequence is Integrin beta-1 (799 aa).

Positions 1–20 are cleaved as a signal peptide; it reads MNLQLVFWIGLISLICSVFG. The Extracellular portion of the chain corresponds to 21-729; sequence QTDKNRCLKA…ETPDCPTGPD (709 aa). In terms of domain architecture, PSI spans 26-76; that stretch reads RCLKANAKSCGECIQAGPNCGWCTNTTFLQEGMPTSARCDDLEALKKKGCH. Disulfide bonds link cysteine 27-cysteine 45, cysteine 35-cysteine 465, cysteine 38-cysteine 64, cysteine 48-cysteine 75, cysteine 207-cysteine 213, cysteine 261-cysteine 301, cysteine 401-cysteine 415, cysteine 435-cysteine 463, cysteine 467-cysteine 487, cysteine 478-cysteine 490, cysteine 492-cysteine 501, cysteine 503-cysteine 534, cysteine 517-cysteine 532, cysteine 526-cysteine 537, cysteine 539-cysteine 554, cysteine 556-cysteine 577, cysteine 561-cysteine 575, cysteine 569-cysteine 580, cysteine 582-cysteine 591, cysteine 593-cysteine 616, cysteine 600-cysteine 614, cysteine 608-cysteine 619, cysteine 621-cysteine 631, cysteine 634-cysteine 637, cysteine 641-cysteine 692, cysteine 647-cysteine 666, cysteine 650-cysteine 662, and cysteine 700-cysteine 724. N-linked (GlcNAc...) asparagine glycosylation is found at asparagine 50, asparagine 94, and asparagine 97. In terms of domain architecture, VWFA spans 140 to 378; that stretch reads DYPIDLYYLM…QLIIDAYNSL (239 aa). Serine 152 and serine 154 together coordinate Mg(2+). Ca(2+) contacts are provided by serine 154, aspartate 157, aspartate 158, and glutamate 189. The CX3CL1-binding stretch occupies residues 207–213; the sequence is CTSEQNC. Asparagine 212 carries N-linked (GlcNAc...) asparagine glycosylation. Residues asparagine 244, aspartate 246, proline 248, and glutamate 249 each contribute to the Ca(2+) site. Glutamate 249 lines the Mg(2+) pocket. The N-linked (GlcNAc...) asparagine glycan is linked to asparagine 269. Positions 295–314 are CX3CL1-binding; the sequence is LPNDGQCHLENNVYTMSHYY. Glycine 362 contacts Ca(2+). N-linked (GlcNAc...) asparagine glycans are attached at residues asparagine 363, asparagine 406, and asparagine 417. Positions 383–466 are interaction with TMEM182; sequence ILENSKLPDG…VVLQFICKCN (84 aa). I-EGF domains are found at residues 467–502, 503–555, 556–592, and 593–632; these read CQSH…RHCE, CSTD…KFCE, CDNF…SACD, and CSLD…PTCE. Residue asparagine 482 is glycosylated (N-linked (GlcNAc...) asparagine). A glycan (N-linked (GlcNAc...) asparagine) is linked at asparagine 521. Asparagine 585 carries an N-linked (GlcNAc...) asparagine glycan. The N-linked (GlcNAc...) asparagine glycan is linked to asparagine 670. A helical membrane pass occupies residues 730–752; that stretch reads IIPIVAGVVAGIVLIGLALLLIW. Residues 753 to 799 lie on the Cytoplasmic side of the membrane; sequence KLLMIIHDRREFAKFEKEKMNAKWDTGENPIYKSAVTTVVNPKYEGK. The interval 763-768 is signal for sorting from recycling endosomes; interaction with ACAP1; sequence EFAKFE. At threonine 778 the chain carries Phosphothreonine. The residue at position 784 (tyrosine 784) is a Phosphotyrosine. Residue serine 786 is modified to Phosphoserine. Residues 786-793 form an interaction with ITGB1BP1 region; the sequence is SAVTTVVN. A Phosphothreonine modification is found at threonine 790. At lysine 795 the chain carries N6-acetyllysine; alternate. A Glycyl lysine isopeptide (Lys-Gly) (interchain with G-Cter in SUMO1); alternate cross-link involves residue lysine 795.

This sequence belongs to the integrin beta chain family. As to quaternary structure, interacts with seprase FAP (seprase); the interaction occurs at the cell surface of invadopodia membrane in a collagen-dependent manner. Heterodimer of an alpha and a beta subunit. Beta-1 associates with either alpha-1, alpha-2, alpha-3, alpha-4, alpha-5, alpha-6, alpha-7, alpha-8, alpha-9, alpha-10, alpha-11 or alpha-V. ITGA6:ITGB1 is found in a complex with CD9; interaction takes place in oocytes and is involved in sperm-egg fusion. Binds LGALS3BP and NMRK2, when associated with alpha-7, but not with alpha-5. Interacts with FLNA, FLNB, FLNC and RANBP9. Interacts with KRT1 in the presence of RACK1 and SRC. Interacts with JAML; integrin alpha-4/beta-1 may regulate leukocyte to endothelial cells adhesion by controlling JAML homodimerization. Interacts with RAB21. Interacts (via the cytoplasmic region) with RAB25 (via the hypervariable C-terminal region). Interacts with MYO10. Interacts with ITGB1BP1 (via C-terminal region); the interaction is a prerequisite for focal adhesion disassembly. Interacts with TLN1; the interaction is prevented by competitive binding of ITGB1BP1. Interacts with ACAP1; required for ITGB1 recycling. Interacts with ASAP3. Interacts with FERMT2; the interaction is inhibited in presence of ITGB1BP1. Interacts with DAB2. Interacts with FGR and HCK. Interacts with alpha-7A and alpha-7B in adult skeletal muscle. Interacts with alpha-7B in cardiomyocytes of adult heart. Interacts with EMP2; the interaction may be direct or indirect and ITGB1 has a heterodimer form. ITGA5:ITGB1 interacts with CCN3. ITGA4:ITGB1 is found in a ternary complex with CX3CR1 and CX3CL1. ITGA5:ITGB1 interacts with FBN1. ITGA5:ITGB1 acts as a receptor for fibronectin FN1 and mediates R-G-D-dependent cell adhesion to FN1. ITGA5:ITGB1 interacts with IL1B. Interacts with MDK. ITGA4:ITGB1 interacts with MDK; this interaction mediates MDK-induced osteoblast cells migration through PXN phosphorylation. ITGA6:ITGB1 interacts with MDK; this interaction mediates MDK-induced neurite-outgrowth. ITGA5:ITGB1 interacts with ACE2. Interacts with TMEM182 and LAMB1. Interacts with tensin TNS3; TNS3 also interacts with PEAK1, thus acting as an adapter molecule to bridge the association of PEAK1 with ITGB1. Interacts with tensin TNS4; the interaction displaces tensin TNS3 from the ITGB1 cytoplasmic tail and promotes ITGB1 stability. Integrin ITGA9:ITGB1 interacts with SPP1/OPN (via N-terminus). Integrin ITGA9:ITGB1 interacts with TNC/TNFN3 (via the 3rd Fibronectin type-III domain). Integrins ITGA4:ITGB1 and ITGA9:ITGB1 interact with SVEP1 (via Sushi domain 21); thereby inhibit Ca(2+) intracellular signaling and as a result repress vasocontraction. ITGA4:ITGB1 and ITGA5:ITGB1 interacts with SELP. ITGA5:ITGB1 interacts with IGFBP1. ITGA4:ITGB1 interacts with BCAM. Interacts with ADGRG6.

The protein resides in the cell membrane. Its subcellular location is the cell projection. It is found in the invadopodium membrane. It localises to the ruffle membrane. The protein localises to the recycling endosome. The protein resides in the melanosome. Its subcellular location is the lamellipodium. It is found in the ruffle. It localises to the cell junction. The protein localises to the focal adhesion. Integrins alpha-1/beta-1, alpha-2/beta-1, alpha-10/beta-1 and alpha-11/beta-1 are receptors for collagen. Integrins alpha-1/beta-1 and alpha-2/beta-2 recognize the proline-hydroxylated sequence G-F-P-G-E-R in collagen. Integrins alpha-2/beta-1, alpha-3/beta-1, alpha-4/beta-1, alpha-5/beta-1, alpha-8/beta-1, alpha-10/beta-1, alpha-11/beta-1 and alpha-V/beta-1 are receptors for fibronectin. Alpha-4/beta-1 recognizes one or more domains within the alternatively spliced CS-1 and CS-5 regions of fibronectin. Integrin alpha-5/beta-1 is a receptor for fibrinogen. Integrin alpha-1/beta-1, alpha-2/beta-1, alpha-6/beta-1 and alpha-7/beta-1 are receptors for lamimin. Integrin alpha-6/beta-1 (ITGA6:ITGB1) is present in oocytes and is involved in sperm-egg fusion. Integrin alpha-4/beta-1 is a receptor for VCAM1 and recognizes the sequence Q-I-D-S in VCAM1. Integrin alpha-9/beta-1 is a receptor for VCAM1, cytotactin and osteopontin. It recognizes the sequence A-E-I-D-G-I-E-L in cytotactin. Integrin alpha-3/beta-1 is a receptor for epiligrin, thrombospondin and CSPG4. Integrin alpha-3/beta-1 provides a docking site for FAP (seprase) at invadopodia plasma membranes in a collagen-dependent manner and hence may participate in the adhesion, formation of invadopodia and matrix degradation processes, promoting cell invasion. Alpha-3/beta-1 may mediate with LGALS3 the stimulation by CSPG4 of endothelial cells migration. Integrin alpha-V/beta-1 is a receptor for vitronectin. Beta-1 integrins recognize the sequence R-G-D in a wide array of ligands. When associated with alpha-7/beta-1 integrin, regulates cell adhesion and laminin matrix deposition. Involved in promoting endothelial cell motility and angiogenesis. Involved in osteoblast compaction through the fibronectin fibrillogenesis cell-mediated matrix assembly process and the formation of mineralized bone nodules. May be involved in up-regulation of the activity of kinases such as PKC via binding to KRT1. Together with KRT1 and RACK1, serves as a platform for SRC activation or inactivation. Plays a mechanistic adhesive role during telophase, required for the successful completion of cytokinesis. ITGA4:ITGB1 binds to fractalkine (CX3CL1) and may act as its coreceptor in CX3CR1-dependent fractalkine signaling. ITGA4:ITGB1 and ITGA5:ITGB1 bind to PLA2G2A via a site (site 2) which is distinct from the classical ligand-binding site (site 1) and this induces integrin conformational changes and enhanced ligand binding to site 1. ITGA5:ITGB1 acts as a receptor for fibrillin-1 (FBN1) and mediates R-G-D-dependent cell adhesion to FBN1. ITGA5:ITGB1 is a receptor for IL1B and binding is essential for IL1B signaling. ITGA5:ITGB3 is a receptor for soluble CD40LG and is required for CD40/CD40LG signaling. Plays an important role in myoblast differentiation and fusion during skeletal myogenesis. ITGA9:ITGB1 may play a crucial role in SVEP1/polydom-mediated myoblast cell adhesion. Integrins ITGA9:ITGB1 and ITGA4:ITGB1 repress PRKCA-mediated L-type voltage-gated channel Ca(2+) influx and ROCK-mediated calcium sensitivity in vascular smooth muscle cells via their interaction with SVEP1, thereby inhibit vasocontraction. The sequence is that of Integrin beta-1 (Itgb1) from Rattus norvegicus (Rat).